Consider the following 576-residue polypeptide: Pentatricopeptide repeat-containing protein At1g79080, chloroplastic (576 aa).

Residues Met1–Ser37 constitute a chloroplast transit peptide. PPR repeat units follow at residues Asn105–Pro139, Asp140–Ser174, Asn175–Pro209, Asn210–Pro244, Asn245–Ala279, Asn280–Pro314, Ser315–Phe349, Thr352–Pro386, Asn387–Lys417, Thr422–Pro456, Asp457–Ser487, Thr493–Pro527, and Asn528–Gly562.

Belongs to the PPR family. P subfamily.

Its subcellular location is the plastid. It is found in the chloroplast. In Arabidopsis thaliana (Mouse-ear cress), this protein is Pentatricopeptide repeat-containing protein At1g79080, chloroplastic.